Reading from the N-terminus, the 310-residue chain is Atrochrysone carboxyl ACP thioesterase CPUR_05436 (310 aa).

Zn(2+) is bound by residues His-105, His-107, Asp-109, and His-110. Residue Asp-109 is the Proton donor/acceptor of the active site.

This sequence belongs to the metallo-beta-lactamase superfamily. Zn(2+) serves as cofactor.

The enzyme catalyses atrochrysone carboxyl-[ACP] + H2O = atrochrysone carboxylate + holo-[ACP] + H(+). It participates in pigment biosynthesis. Its function is as follows. Atrochrysone carboxyl ACP thioesterase; part of the ergochrome gene cluster responsible for the typical purple-black color of the ergot sclerotia. The ergochrome gene cluster produces several ergot pigments including the yellow ergochrome secalonic acid and its derivatives, as well as the red anthraquinones endocrocin and clavorubin. The pathway begins with the synthesis of atrochrysone thioester by the polyketide synthase (PKS) CPUR_05437. The atrochrysone carboxyl ACP thioesterase CPUR_05436 then breaks the thioester bond and releases the atrochrysone carboxylic acid from CPUR_05437. The atrochrysone carboxylic acid is then converted to atrochrysone which is further transformed into emodin anthrone. The next step is performed by the anthrone oxygenase CPUR_05434 that catalyzes the oxidation of emodinanthrone to emodin. Emodin is further modified to yield monodictyphenone via several steps involving CPUR_05427, CPUR_05428, CPUR_05429 and CPUR_05430. The short chain dehydrogenase/reductase CPUR_05418 then catalyzes the C-5 ketoreduction to give the xanthone skeleton of the monomeric units. Ergochromes formation requires further dimerization steps of different xanthone units, probably catalyzed by the cytochrome P450 monooxygenase CPUR_05419. CPUR_05425, CPUR_05426 and CPUR_05431 are unique to Claviceps, thus it is likely that they are involved in further modification of xanthone units or in their dimerization. The yellow ergochromes and the red anthraquinone pigments endocrocin and clavorubin are products from the same PKS derived precursors and the latter are likely shunt products in the pathway of xanthone biosynthesis. It is proposed that atrochrysone carboxylic acid released from the PKS CPUR_05437 can also be converted to endocrocin anthrone which is further oxidized into endocrocin by CPUR_05435. Endocrocin could be then modified to clavorubin, possibly by CPUR_05423 and CPUR_05431. Clavorubin is the principal anthraquinone metabolite produced by the cluster with a much higher yield compared to endocrocin. This Claviceps purpurea (strain 20.1) (Ergot fungus) protein is Atrochrysone carboxyl ACP thioesterase CPUR_05436.